The chain runs to 232 residues: tRNA (guanine-N(1)-)-methyltransferase (232 aa).

Residues G111 and 131 to 136 (IGDYIL) each bind S-adenosyl-L-methionine.

The protein belongs to the RNA methyltransferase TrmD family. As to quaternary structure, homodimer.

Its subcellular location is the cytoplasm. It catalyses the reaction guanosine(37) in tRNA + S-adenosyl-L-methionine = N(1)-methylguanosine(37) in tRNA + S-adenosyl-L-homocysteine + H(+). In terms of biological role, specifically methylates guanosine-37 in various tRNAs. The polypeptide is tRNA (guanine-N(1)-)-methyltransferase (Bartonella henselae (strain ATCC 49882 / DSM 28221 / CCUG 30454 / Houston 1) (Rochalimaea henselae)).